The following is a 405-amino-acid chain: Cysteine desulfurase IscS (405 aa).

Residues 75-76 (AT), asparagine 156, glutamine 184, and 204-206 (SAH) each bind pyridoxal 5'-phosphate. N6-(pyridoxal phosphate)lysine is present on lysine 207. Threonine 244 is a binding site for pyridoxal 5'-phosphate. Residue cysteine 329 is the Cysteine persulfide intermediate of the active site. [2Fe-2S] cluster is bound at residue cysteine 329.

It belongs to the class-V pyridoxal-phosphate-dependent aminotransferase family. NifS/IscS subfamily. As to quaternary structure, homodimer. Forms a heterotetramer with IscU, interacts with other sulfur acceptors. Requires pyridoxal 5'-phosphate as cofactor.

It is found in the cytoplasm. The catalysed reaction is (sulfur carrier)-H + L-cysteine = (sulfur carrier)-SH + L-alanine. The protein operates within cofactor biosynthesis; iron-sulfur cluster biosynthesis. Master enzyme that delivers sulfur to a number of partners involved in Fe-S cluster assembly, tRNA modification or cofactor biosynthesis. Catalyzes the removal of elemental sulfur atoms from cysteine to produce alanine. Functions as a sulfur delivery protein for Fe-S cluster synthesis onto IscU, an Fe-S scaffold assembly protein, as well as other S acceptor proteins. The sequence is that of Cysteine desulfurase IscS from Acinetobacter baumannii (strain AB307-0294).